We begin with the raw amino-acid sequence, 558 residues long: MASSVVFAATGSLSVPPLKSRRFYVNSSLDSDVSDMSVNAPKGLFPPEPVPYKGPKLKVAIIGAGLAGMSTAVELLDQGHEVDIYDSRTFIGGKVGSFVDRRGNHIEMGLHVFFGCYNNLFRLMKKVGAEKNLLVKDHTHTFINKDGTIGELDFRFPVGAPIHGIRAFLVTNQLKPYDKLRNSLALALSPVVKALVDPDGAMRDIRNLDSISFSDWFLSKGGTRASIQRMWDPVAYALGFIDCDNMSARCMLTIFSLFATKTEASLLRMLKGSPDVYLSGPIKQYITDRGGRIHLRWGCREILYDKSADGETYVTGLAISKATNKKIVKADVYVAACDVPGIKRLLPKEWRESRFFNDIYELEGVPVVTVQLRYNGWVTELQDIELARQLKRAVGLDNLLYTPDADFSCFADLALASPADYYIEGQGTLLQCVLTPGDPYMRMPNDKIIEKVAMQVTELFPSSRGLEVTWSSVVKIAQSLYREAPGKDPFRPDQKTPIKNFFLAGSYTKQDYIDSMEGATLSGRQASSYICDAGEELAELNKKLSSSATAVPDELSLV.

The N-terminal 27 residues, 1 to 27, are a transit peptide targeting the chloroplast and chromoplast; sequence MASSVVFAATGSLSVPPLKSRRFYVNS.

This sequence belongs to the zeta carotene desaturase family. Requires decylplastoquinone as cofactor. It depends on 6-decylubiquinone as a cofactor. Highly expressed in leaves. Expressed at low levels in flowers and siliques.

The protein resides in the plastid. Its subcellular location is the chloroplast. It localises to the chromoplast. The catalysed reaction is 9,9'-di-cis-zeta-carotene + 2 a quinone = 7,7',9,9'-tetra-cis-lycopene + 2 a quinol. Its pathway is carotenoid biosynthesis; lycopene biosynthesis. Functionally, plays a crucial role in plant growth and development. Is essential for the biosynthesis of carotenoids. Carotenoids are involved in different physiological processes, including coloration, photoprotection, biosynthesis of abscisic acid (ABA) and chloroplast biogenesis. Catalyzes the conversion of zeta-carotene to lycopene via the intermediary of neurosporene. It carries out two consecutive desaturations (introduction of double bonds) at positions C-7 and C-7'. Shows stereoselectivity toward trans C15-C15'zeta-carotene double bond. The zeta-carotene produced by the phytoene desaturase PDS has a C15-C15' double bond in the cis configuration and it requires isomerization before being recognized as substrate by ZDS. The main product is 7,9,7',9'-tetra-cis-lycopene (pro-lycopene). In Arabidopsis thaliana (Mouse-ear cress), this protein is Zeta-carotene desaturase, chloroplastic/chromoplastic.